A 350-amino-acid polypeptide reads, in one-letter code: Holliday junction branch migration complex subunit RuvB (350 aa).

A disordered region spans residues 1–22; that stretch reads MDHTASLSPVRPEAQPTDDRER. The segment at 1–185 is large ATPase domain (RuvB-L); it reads MDHTASLSPV…FGIVERFEFY (185 aa). ATP contacts are provided by residues L24, R25, G66, K69, T70, T71, 132–134, R175, Y185, and R222; that span reads EDY. Residue T70 participates in Mg(2+) binding. The interval 186–256 is small ATPAse domain (RuvB-S); the sequence is TPEELAAIVQ…IVRAGLAHLK (71 aa). Residues 259-350 form a head domain (RuvB-H) region; it reads ELGLELHDIQ…PHSPEQGTLL (92 aa). DNA-binding residues include R314 and R319.

The protein belongs to the RuvB family. In terms of assembly, homohexamer. Forms an RuvA(8)-RuvB(12)-Holliday junction (HJ) complex. HJ DNA is sandwiched between 2 RuvA tetramers; dsDNA enters through RuvA and exits via RuvB. An RuvB hexamer assembles on each DNA strand where it exits the tetramer. Each RuvB hexamer is contacted by two RuvA subunits (via domain III) on 2 adjacent RuvB subunits; this complex drives branch migration. In the full resolvosome a probable DNA-RuvA(4)-RuvB(12)-RuvC(2) complex forms which resolves the HJ.

It localises to the cytoplasm. It carries out the reaction ATP + H2O = ADP + phosphate + H(+). Its function is as follows. The RuvA-RuvB-RuvC complex processes Holliday junction (HJ) DNA during genetic recombination and DNA repair, while the RuvA-RuvB complex plays an important role in the rescue of blocked DNA replication forks via replication fork reversal (RFR). RuvA specifically binds to HJ cruciform DNA, conferring on it an open structure. The RuvB hexamer acts as an ATP-dependent pump, pulling dsDNA into and through the RuvAB complex. RuvB forms 2 homohexamers on either side of HJ DNA bound by 1 or 2 RuvA tetramers; 4 subunits per hexamer contact DNA at a time. Coordinated motions by a converter formed by DNA-disengaged RuvB subunits stimulates ATP hydrolysis and nucleotide exchange. Immobilization of the converter enables RuvB to convert the ATP-contained energy into a lever motion, pulling 2 nucleotides of DNA out of the RuvA tetramer per ATP hydrolyzed, thus driving DNA branch migration. The RuvB motors rotate together with the DNA substrate, which together with the progressing nucleotide cycle form the mechanistic basis for DNA recombination by continuous HJ branch migration. Branch migration allows RuvC to scan DNA until it finds its consensus sequence, where it cleaves and resolves cruciform DNA. The polypeptide is Holliday junction branch migration complex subunit RuvB (Treponema pallidum (strain Nichols)).